A 231-amino-acid chain; its full sequence is Trypsin-2 (231 aa).

The first 4 residues, 1-4 (AAFA), serve as a signal peptide directing secretion. Positions 5–9 (TEDDK) are cleaved as a propeptide — activation peptide. The region spanning 10–229 (IVGGYECKAY…FNDWLTSTMA (220 aa)) is the Peptidase S1 domain. 6 disulfides stabilise this stretch: Cys-16–Cys-145, Cys-34–Cys-50, Cys-118–Cys-218, Cys-125–Cys-191, Cys-156–Cys-170, and Cys-181–Cys-205. The active-site Charge relay system is the His-49. 4 residues coordinate Ca(2+): Glu-61, Asn-63, Val-66, and Glu-71. The active-site Charge relay system is Asp-93. Catalysis depends on Ser-185, which acts as the Charge relay system.

This sequence belongs to the peptidase S1 family. Ca(2+) is required as a cofactor.

Its subcellular location is the secreted. The protein resides in the extracellular space. The catalysed reaction is Preferential cleavage: Arg-|-Xaa, Lys-|-Xaa.. This is Trypsin-2 from Salmo salar (Atlantic salmon).